A 410-amino-acid chain; its full sequence is UPF0761 membrane protein Csal_1895 (410 aa).

The next 6 helical transmembrane spans lie at 43 to 63 (LFAVVPFMTVLYAMLSAIPSF), 99 to 119 (SLTLIGLMFLLVTAVMMMVTV), 139 to 159 (FLLYWAVLTLGPLLLGSGFLL), 180 to 200 (VAFLRLLPLTLSFTAFVFIYM), 212 to 232 (AVAGAGLAALALELAKGAFSL), and 247 to 267 (FAAVPLFLVWVFLSWAIVLVG).

This sequence belongs to the UPF0761 family.

It is found in the cell inner membrane. In Chromohalobacter salexigens (strain ATCC BAA-138 / DSM 3043 / CIP 106854 / NCIMB 13768 / 1H11), this protein is UPF0761 membrane protein Csal_1895.